The sequence spans 112 residues: DIVLTQSPASLAVSLGQRATISCRASZSVNWYGNSFMZWYZZKPGZPPKLLIYRASNLZSGIPARFSGSGSRTBFTLTIBPVZABDVATYFCZZSBZAPWTFGSGTKLEIKR.

Positions D1–C23 are framework-1. A disulfide bridge connects residues C23 and C92. Residues R24 to Z38 are complementarity-determining-1. Residues W39 to Y53 are framework-2. The tract at residues R54–S60 is complementarity-determining-2. The tract at residues G61–C92 is framework-3. The interval Z93 to T101 is complementarity-determining-3. Residues F102 to K111 are framework-4.

The sequence is that of Ig kappa chain V-III region TEPC 124 from Mus musculus (Mouse).